A 150-amino-acid chain; its full sequence is MNVILLDKVANLGSLGDQVSVKAGYARNFLLPYGKAVVANAANTEVFEARRAELEAKLAAELATATARADKLTALEAVVIASKAGDEGKLFGSIGNRDIADAVTAAGVALAKSEVRLPLGALRTTGSFEIEVQVHAEVKAVVKIAIVAEA.

It belongs to the bacterial ribosomal protein bL9 family.

In terms of biological role, binds to the 23S rRNA. This is Large ribosomal subunit protein bL9 from Shewanella frigidimarina (strain NCIMB 400).